An 879-amino-acid chain; its full sequence is Probable phospholipid transport protein YdbH (879 aa).

Over 1–6 (MLGKYK) the chain is Cytoplasmic. Residues 7–29 (AVLALLLLIILVPLTLLMTLGLW) form a helical membrane-spanning segment. Over 30 to 879 (VPTLAGIWLP…PQGKECEEKQ (850 aa)) the chain is Periplasmic.

In terms of assembly, interacts with the outer membrane lipoprotein YnbE.

Its subcellular location is the cell inner membrane. In terms of biological role, involved in outer membrane lipid homeostasis. Interacts with the outer membrane lipoprotein YnbE to form a functional protein bridge connecting the inner and outer membranes of the cell. Likely transports phospholipids between the inner membrane and the outer membrane. It would provide a bridge-like structure that protects phospholipids as they travel across the periplasm. TamB, YdbH and YhdP are redundant, but not equivalent, in performing an essential function for growth and maintaining lipid homeostasis in the outer membrane. Any of these three proteins is sufficient for growth. The polypeptide is Probable phospholipid transport protein YdbH (ydbH) (Escherichia coli (strain K12)).